Reading from the N-terminus, the 825-residue chain is Interleukin-4 receptor subunit alpha (825 aa).

The signal sequence occupies residues 1–25 (MGWLCSGLLFPVSCLVLLQVASSGN). The Extracellular portion of the chain corresponds to 26–232 (MKVLQEPTCV…NSYREPFEQH (207 aa)). C34 and C44 are joined by a disulfide. N-linked (GlcNAc...) asparagine glycosylation is present at N53. A disulfide bridge connects residues C74 and C86. 5 N-linked (GlcNAc...) asparagine glycosylation sites follow: N98, N128, N134, N176, and N209. In terms of domain architecture, Fibronectin type-III spans 125–224 (APGNLTVHTN…WSPSTKWHNS (100 aa)). The WSXWS motif motif lies at 212 to 216 (WSEWS). Residues 233–256 (LLLGVSVSCIVILAVCLLCYVSIT) traverse the membrane as a helical segment. At 257–825 (KIKKEWWDQI…SVGPTYMRVS (569 aa)) the chain is on the cytoplasmic side. The short motif at 262-270 (WWDQIPNPA) is the Box 1 motif element. Disordered regions lie at residues 373–397 (EEEE…DFQE) and 433–485 (LPPS…LTCT). The required for IRS1 activation and IL4-induced cell growth stretch occupies residues 437 to 557 (GSTSAHMPWD…ETWEQILRRN (121 aa)). Polar residues predominate over residues 475-485 (PTQSPDNLTCT). Phosphotyrosine is present on residues Y497, Y575, Y603, and Y631. The required for IL4-induced gene expression stretch occupies residues 558–657 (VLQHGAAAAP…VPVPLFTFGL (100 aa)). The tract at residues 651–703 (PLFTFGLDREPPRSPQSSHLPSSSPEHLGLEPGEKVEDMPKPPLPQEQATDPL) is disordered. A compositionally biased stretch (low complexity) spans 665 to 677 (PQSSHLPSSSPEH). Residues 678 to 690 (LGLEPGEKVEDMP) show a composition bias toward basic and acidic residues. An ITIM motif motif is present at residues 711-716 (IVYSAL). A disordered region spans residues 782-809 (PSGISEKSKSSSSFHPAPGNAQSSSQTP).

The protein belongs to the type I cytokine receptor family. Type 4 subfamily. The functional IL4 receptor is formed by initial binding of IL4 to IL4R. Subsequent recruitment to the complex of the common gamma chain, in immune cells, creates a type I receptor and, in non-immune cells, of IL13RA1 forms a type II receptor. IL4R can also interact with the IL13/IL13RA1 complex to form a similar type II receptor. Interacts with PIK3C3. Interacts with the SH2-containing phosphatases, PTPN6/SHIP1, PTPN11/SHIP2 and INPP5D/SHIP. Interacts with JAK1 through a Box 1-containing region; inhibited by SOCS5. Interacts with SOCS5; inhibits IL4 signaling. Interacts with JAK3. Interacts with CLM1. Interacts with IL13RA2. Post-translationally, on IL4 binding, phosphorylated on C-terminal tyrosine residues. Phosphorylation on any one of tyrosine residues, Tyr-575, Tyr-603 or Tyr-631, is required for STAT6-induced gene induction. In terms of processing, the soluble form (sIL4R/IL4BP) can also be produced by proteolytic cleavage at the cell surface (shedding) by a metalloproteinase. As to expression, isoform 1 and isoform 2 are highly expressed in activated T-cells.

The protein resides in the cell membrane. It is found in the secreted. Functionally, receptor for both interleukin 4 and interleukin 13. Couples to the JAK1/2/3-STAT6 pathway. The IL4 response is involved in promoting Th2 differentiation. The IL4/IL13 responses are involved in regulating IgE production and, chemokine and mucus production at sites of allergic inflammation. In certain cell types, can signal through activation of insulin receptor substrates, IRS1/IRS2. In terms of biological role, soluble IL4R (sIL4R) inhibits IL4-mediated cell proliferation and IL5 up-regulation by T-cells. The chain is Interleukin-4 receptor subunit alpha (IL4R) from Homo sapiens (Human).